We begin with the raw amino-acid sequence, 467 residues long: FAD-dependent oxidoreductase dbaF (467 aa).

The first 20 residues, 1-20 (MKSVLASGALTLAFSLAALA), serve as a signal peptide directing secretion. N-linked (GlcNAc...) asparagine glycosylation is found at N96, N134, N337, N391, and N451.

It belongs to the beta-cyclopiazonate dehydrogenase family. Requires FAD as cofactor.

It participates in secondary metabolite biosynthesis. Functionally, FAD-dependent oxidoreductase; part of the gene cluster that mediates the biosynthesis of the antibiotic 2,4-dihydroxy-3-methyl-6-(2-oxopropyl)benzaldehyde (DHMBA) and its derivatives. The direct non-reducing polyketide synthase dbaI product is 2,4-dihydroxy-3-methyl-6-(2-oxopropyl)benzaldehyde (DHMBA), produced by condensation of one acetyl-CoA starter unit with 4 malonyl-CoA units and one methylation step. The FAD-dependent monooxygenase dbaH is responsible for the synthesis of yellow pigments derived from the oxidation of DHMBA. The roles of dbaB, C, E and F have still to be determined. In Emericella nidulans (strain FGSC A4 / ATCC 38163 / CBS 112.46 / NRRL 194 / M139) (Aspergillus nidulans), this protein is FAD-dependent oxidoreductase dbaF.